A 163-amino-acid polypeptide reads, in one-letter code: Augmin complex subunit wac (163 aa).

Residues 86-115 adopt a coiled-coil conformation; the sequence is ELQRILSSIEEATRDVVMLERFNAAAEERL.

Component of the augmin complex composed of dgt2, dgt3, dgt4, dgt5, dgt6, msd1, msd5 and wac. The complex interacts directly or indirectly with microtubules and is required for centrosome-independent generation of spindle microtubules. wac interacts directly (via coiled coil) with dgt2. In adult females, detected only in the abdomen with no expression in the head or thorax (at protein level).

It localises to the cytoplasm. It is found in the cytoskeleton. The protein resides in the spindle. The protein localises to the spindle pole. As part of the augmin complex, plays a role in centrosome-independent generation of spindle microtubules. The complex is required for mitotic spindle assembly through its involvement in localizing gamma-tubulin to spindle microtubules. wac is dispensable for somatic mitosis and for assembly of spindle microtubules in oocytes during female meiosis but is required during female meiosis for chromosome alignment and segregation. It is required for microtubule assembly near spindle poles in oocytes. It is also required for acentrosomal microtubule nucleation and meiotic spindle formation during male meiosis. wac binds to microtubules in vitro. The sequence is that of Augmin complex subunit wac from Drosophila melanogaster (Fruit fly).